A 400-amino-acid polypeptide reads, in one-letter code: Phosphoribosylamine--glycine ligase (400 aa).

Residues 99 to 303 enclose the ATP-grasp domain; it reads KRFMKKYGIR…FVNAVLEGYR (205 aa). Residue 125–186 participates in ATP binding; that stretch reads IKKFSPPYVI…DEFLAGNELS (62 aa). Mg(2+) is bound by residues Glu273 and Asn275.

The protein belongs to the GARS family. Requires Mg(2+) as cofactor. Mn(2+) serves as cofactor.

It catalyses the reaction 5-phospho-beta-D-ribosylamine + glycine + ATP = N(1)-(5-phospho-beta-D-ribosyl)glycinamide + ADP + phosphate + H(+). The protein operates within purine metabolism; IMP biosynthesis via de novo pathway; N(1)-(5-phospho-D-ribosyl)glycinamide from 5-phospho-alpha-D-ribose 1-diphosphate: step 2/2. The protein is Phosphoribosylamine--glycine ligase of Thermotoga maritima (strain ATCC 43589 / DSM 3109 / JCM 10099 / NBRC 100826 / MSB8).